A 669-amino-acid chain; its full sequence is Phosphatidylinositol-3-phosphate phosphatase MTMR1 (669 aa).

Met1 carries the N-acetylmethionine modification. The span at 1–17 (MDRPVAAAAAASAASCE) shows a compositional bias: low complexity. The disordered stretch occupies residues 1-55 (MDRPVAAAAAASAASCEGAGGPGPGPGASWRPSRVAGGASASSRHPSIETLDSPT). Residues Ser47 and Ser53 each carry the phosphoserine modification. The region spanning 94 to 165 (NKLAQMEEAP…GVISRVEKIG (72 aa)) is the GRAM domain. The Myotubularin phosphatase domain occupies 230–605 (GWKVYDPVSE…SHLELWVNYY (376 aa)). A 1,2-diacyl-sn-glycero-3-phospho-(1D-myo-inositol-3-phosphate) is bound by residues Asn355, Asn380, and Ile381. Cys442 (phosphocysteine intermediate) is an active-site residue. A 1,2-diacyl-sn-glycero-3-phospho-(1D-myo-inositol-3-phosphate) contacts are provided by Ser443, Asp444, Gly445, Trp446, Asp447, Arg448, and Arg488. Phosphate is bound at residue Ser443. Phosphate is bound by residues Gly445, Trp446, Asp447, and Arg448. The required for dimerization stretch occupies residues 612–669 (MRPQMPIHQNLKELLAIKAELQKRVEDLQREMATRTISSSSERGSSPTHSATPVHTSV). The tract at residues 644-669 (ATRTISSSSERGSSPTHSATPVHTSV) is disordered. The span at 649–661 (SSSSERGSSPTHS) shows a compositional bias: low complexity.

The protein belongs to the protein-tyrosine phosphatase family. Non-receptor class myotubularin subfamily. In terms of assembly, homodimer. As to expression, widely expressed. Detected in skeletal muscle, heart, lung, liver and brain.

The protein resides in the cell membrane. It is found in the cytoplasm. The enzyme catalyses a 1,2-diacyl-sn-glycero-3-phospho-(1D-myo-inositol-3-phosphate) + H2O = a 1,2-diacyl-sn-glycero-3-phospho-(1D-myo-inositol) + phosphate. The catalysed reaction is 1,2-dioctanoyl-sn-glycero-3-phospho-(1-D-myo-inositol-3-phosphate) + H2O = 1,2-dioctanoyl-sn-glycero-3-phospho-(1D-myo-inositol) + phosphate. It carries out the reaction a 1,2-diacyl-sn-glycero-3-phospho-(1D-myo-inositol-3,5-bisphosphate) + H2O = a 1,2-diacyl-sn-glycero-3-phospho-(1D-myo-inositol-5-phosphate) + phosphate. Functionally, lipid phosphatase that specifically dephosphorylates the D-3 position of phosphatidylinositol 3-phosphate, generating phosphatidylinositol. Could also dephosphorylate phosphatidylinositol 3,5-bisphosphate to produce phosphatidylinositol 5-phosphate. The chain is Phosphatidylinositol-3-phosphate phosphatase MTMR1 from Mus musculus (Mouse).